The primary structure comprises 110 residues: Flagellar hook-basal body complex protein FliE (110 aa).

The protein belongs to the FliE family.

The protein localises to the bacterial flagellum basal body. The chain is Flagellar hook-basal body complex protein FliE from Pseudomonas putida (strain W619).